The following is a 222-amino-acid chain: Ribonuclease T (222 aa).

The 175-residue stretch at 20 to 194 (VVIDVETAGF…YDTERTAELF (175 aa)) folds into the Exonuclease domain. The Mg(2+) site is built by D23, E25, H181, and D186. The active-site Proton donor/acceptor is H181.

This sequence belongs to the RNase T family. Homodimer. Requires Mg(2+) as cofactor.

Its function is as follows. Trims short 3' overhangs of a variety of RNA species, leaving a one or two nucleotide 3' overhang. Responsible for the end-turnover of tRNA: specifically removes the terminal AMP residue from uncharged tRNA (tRNA-C-C-A). Also appears to be involved in tRNA biosynthesis. This is Ribonuclease T from Shewanella oneidensis (strain ATCC 700550 / JCM 31522 / CIP 106686 / LMG 19005 / NCIMB 14063 / MR-1).